The sequence spans 133 residues: MDNLFSRITGEQPLSENPNYNLIQLDKYNYELSVSVPGYKKEELEVSIINNRLNINSKSKKEKEKETKKINWIHQGILKNNFSISFKLEHKIKIKYANLKHGILNLSFFYDLPDQEKPKKISINEEHDHKCNI.

Residues 11-126 enclose the sHSP domain; that stretch reads EQPLSENPNY…KPKKISINEE (116 aa).

Belongs to the small heat shock protein (HSP20) family.

The sequence is that of Small heat shock protein ibp (ibp) from Wigglesworthia glossinidia brevipalpis.